Reading from the N-terminus, the 777-residue chain is B3 domain-containing protein REM-like 1 (777 aa).

Residues 97 to 193 constitute a DNA-binding region (TF-B3 1); sequence FVTFTLAPVD…TPVLSLCFEE (97 aa). 2 disordered regions span residues 200 to 248 and 344 to 391; these read VGEE…TSPS and KSSS…ESSS. Positions 218–243 are enriched in basic and acidic residues; the sequence is KIVKDDNNKDESSTWKREGNHLRCKD. The TF-B3 2 DNA-binding region spans 252–347; the sequence is TLTVTITPDS…TPVLSIKSSS (96 aa). Positions 344 to 368 are enriched in polar residues; that stretch reads KSSSGKGQSEFSKESLSIKPSSGNM. Residues 370–388 show a composition bias toward basic and acidic residues; the sequence is KKVENNREASRKYPPRSRE. 2 DNA-binding regions (TF-B3) span residues 582 to 676 and 683 to 777; these read FLTL…RDSS and FLTL…FYTK.

It localises to the nucleus. The sequence is that of B3 domain-containing protein REM-like 1 from Arabidopsis thaliana (Mouse-ear cress).